An 86-amino-acid polypeptide reads, in one-letter code: ATP synthase subunit c (86 aa).

The next 2 membrane-spanning stretches (helical) occupy residues 4–24 and 57–77; these read AIVAAASAIGAGIAVATGIGA and VAIAESSAIYGLVISIILLFV.

This sequence belongs to the ATPase C chain family. As to quaternary structure, F-type ATPases have 2 components, F(1) - the catalytic core - and F(0) - the membrane proton channel. F(1) has five subunits: alpha(3), beta(3), gamma(1), delta(1), epsilon(1). F(0) has three main subunits: a(1), b(2) and c(10-14). The alpha and beta chains form an alternating ring which encloses part of the gamma chain. F(1) is attached to F(0) by a central stalk formed by the gamma and epsilon chains, while a peripheral stalk is formed by the delta and b chains.

Its subcellular location is the cell membrane. Functionally, f(1)F(0) ATP synthase produces ATP from ADP in the presence of a proton or sodium gradient. F-type ATPases consist of two structural domains, F(1) containing the extramembraneous catalytic core and F(0) containing the membrane proton channel, linked together by a central stalk and a peripheral stalk. During catalysis, ATP synthesis in the catalytic domain of F(1) is coupled via a rotary mechanism of the central stalk subunits to proton translocation. Its function is as follows. Key component of the F(0) channel; it plays a direct role in translocation across the membrane. A homomeric c-ring of between 10-14 subunits forms the central stalk rotor element with the F(1) delta and epsilon subunits. This Clostridioides difficile (strain 630) (Peptoclostridium difficile) protein is ATP synthase subunit c.